Consider the following 186-residue polypeptide: CASP-like protein 4C2 (186 aa).

The Cytoplasmic segment spans residues 1–31 (MRSPQPHRSGGDTQQHFQSTVSVQKLKRFNS). A helical transmembrane segment spans residues 32–52 (LILVFRFAAFCFSLASAVFML). Topologically, residues 53–71 (TNSRGSDSLHWYNFDAFRY) are extracellular. A helical membrane pass occupies residues 72–92 (VFAANAIVAIYSLFEMAASVW). Residues 93-103 (EISRNATLFPE) lie on the Cytoplasmic side of the membrane. Residues 104–124 (ICQVWFDFGHDQVFAYLLLSA) traverse the membrane as a helical segment. Topologically, residues 125 to 150 (NTAGTELARTLKDTCTDNKAFCVQSD) are extracellular. A helical transmembrane segment spans residues 151–171 (IAIVLGFAGFLFLGISSLFSG). At 172 to 186 (FRVVCFIINGSRFYV) the chain is on the cytoplasmic side.

This sequence belongs to the Casparian strip membrane proteins (CASP) family. In terms of assembly, homodimer and heterodimers.

The protein localises to the cell membrane. In Populus trichocarpa (Western balsam poplar), this protein is CASP-like protein 4C2.